Consider the following 182-residue polypeptide: Protein transport protein gos1 (182 aa).

Over 1–163 (MKSMLLRDSV…RKTSIRRRRD (163 aa)) the chain is Cytoplasmic. The chain crosses the membrane as a helical; Anchor for type IV membrane protein span at residues 164–181 (SIILALLISVLMLLFLFF). Residue His182 is a topological domain, vesicular.

Belongs to the GOSR1 family. As to quaternary structure, component of a SNARE complex consisting of sed5, gos1, ykt6, and sft1.

It is found in the golgi apparatus membrane. In terms of biological role, nonessential SNARE involved in retrograde transport within the Golgi complex. The protein is Protein transport protein gos1 (gos1) of Schizosaccharomyces pombe (strain 972 / ATCC 24843) (Fission yeast).